The chain runs to 148 residues: Large ribosomal subunit protein bL9 (148 aa).

The protein belongs to the bacterial ribosomal protein bL9 family.

Functionally, binds to the 23S rRNA. The polypeptide is Large ribosomal subunit protein bL9 (Dechloromonas aromatica (strain RCB)).